The primary structure comprises 318 residues: MEKCTFNLPDVQASKPSIAINLTRVGVTNMKKLVEIKRKDKRPIVLISTFDVFVDLPSDRKGANLSRNFEAVDEVLEKVLSTPVYEIEQLCSDIAHNLLGRHEYANQAEVRMKSEYMIRRASPSTGIKCQEVVNIFAEASAVRGNGDRDYFDVKKLIGAEVVGMTACPCAQEIMRDKAATELANLGVERDKIIKFLEKVPMATHNQRGRGIISIKVAHDFDVSLESIIKIIERSMSSSVYEVLKRSDEKVVVETAHMNPKFVEDCVRAMADNVVKEFPNLPDNAVITIKQTNEESIHRHNAFAERVALMGELRKEISQ.

This sequence belongs to the GTP cyclohydrolase IV family. As to quaternary structure, homodimer. It depends on Fe(2+) as a cofactor.

The enzyme catalyses GTP + H2O = 7,8-dihydroneopterin 2',3'-cyclic phosphate + formate + diphosphate + H(+). It participates in cofactor biosynthesis; 5,6,7,8-tetrahydromethanopterin biosynthesis. Its function is as follows. Converts GTP to 7,8-dihydro-D-neopterin 2',3'-cyclic phosphate, the first intermediate in the biosynthesis of coenzyme methanopterin. The chain is GTP cyclohydrolase MptA from Methanosarcina mazei (strain ATCC BAA-159 / DSM 3647 / Goe1 / Go1 / JCM 11833 / OCM 88) (Methanosarcina frisia).